The following is a 430-amino-acid chain: MTQTSHALFHMAQQCIPGGVNSPVRAFRGVGGDPIFIDHAEGPFFWDVEGKRYLDYVGSWGPMIHGHGHPEVLAAVHAQVNKGLGFGAPTAIEVEMAELVCALVPGIESVRMTSSGTEAVMTAIRLARGYTGRDRIIKFEGNYHGHSDSLLVKAGSGALTLGQPSSAGVPREVSQNTLVLPYNDLPAVVEMMAQFGFDVATIIVEPVAGNMGCVPPEPGFLEGLRAVCDQYGCVLIFDEVMTGFRVALGGAQALYGVRPDLTTLGKIIGGGLPVGAVGGPREIMEYLAPTGPVYQAGTLSGNPVAMAAGLATLRLLTVPGFHERLAAQTAVLCEGLAERAEAAGVPMQINHVPGMFGWFFAEQPVRGFDTVMAADSKRYARFFHGLLARGVYLAPSAYEAGFLSAAHGDTEIAATLDAAEAVLATLKEDA.

At Lys-266 the chain carries N6-(pyridoxal phosphate)lysine.

Belongs to the class-III pyridoxal-phosphate-dependent aminotransferase family. HemL subfamily. Homodimer. It depends on pyridoxal 5'-phosphate as a cofactor.

The protein localises to the cytoplasm. It carries out the reaction (S)-4-amino-5-oxopentanoate = 5-aminolevulinate. It participates in porphyrin-containing compound metabolism; protoporphyrin-IX biosynthesis; 5-aminolevulinate from L-glutamyl-tRNA(Glu): step 2/2. This Acidithiobacillus ferrooxidans (strain ATCC 23270 / DSM 14882 / CIP 104768 / NCIMB 8455) (Ferrobacillus ferrooxidans (strain ATCC 23270)) protein is Glutamate-1-semialdehyde 2,1-aminomutase.